We begin with the raw amino-acid sequence, 288 residues long: Ribosomal RNA small subunit methyltransferase A (288 aa).

N37, L39, G64, E86, D112, and N131 together coordinate S-adenosyl-L-methionine.

The protein belongs to the class I-like SAM-binding methyltransferase superfamily. rRNA adenine N(6)-methyltransferase family. RsmA subfamily.

It is found in the cytoplasm. The catalysed reaction is adenosine(1518)/adenosine(1519) in 16S rRNA + 4 S-adenosyl-L-methionine = N(6)-dimethyladenosine(1518)/N(6)-dimethyladenosine(1519) in 16S rRNA + 4 S-adenosyl-L-homocysteine + 4 H(+). Specifically dimethylates two adjacent adenosines (A1518 and A1519) in the loop of a conserved hairpin near the 3'-end of 16S rRNA in the 30S particle. May play a critical role in biogenesis of 30S subunits. The polypeptide is Ribosomal RNA small subunit methyltransferase A (Rhodospirillum rubrum (strain ATCC 11170 / ATH 1.1.1 / DSM 467 / LMG 4362 / NCIMB 8255 / S1)).